The sequence spans 189 residues: Ribosome maturation factor RimM (189 aa).

The PRC barrel domain occupies 118–189; sequence SGEYYWDDLI…IILVDWDENF (72 aa).

Belongs to the RimM family. Binds ribosomal protein uS19.

Its subcellular location is the cytoplasm. In terms of biological role, an accessory protein needed during the final step in the assembly of 30S ribosomal subunit, possibly for assembly of the head region. Essential for efficient processing of 16S rRNA. May be needed both before and after RbfA during the maturation of 16S rRNA. It has affinity for free ribosomal 30S subunits but not for 70S ribosomes. The sequence is that of Ribosome maturation factor RimM from Ruthia magnifica subsp. Calyptogena magnifica.